The sequence spans 201 residues: Pyridoxal 5'-phosphate synthase subunit PdxT (201 aa).

L-glutamine is bound at residue 48 to 50; that stretch reads GES. Cysteine 80 functions as the Nucleophile in the catalytic mechanism. L-glutamine contacts are provided by residues arginine 109 and 137-138; that span reads IR. Catalysis depends on charge relay system residues histidine 180 and glutamate 182.

This sequence belongs to the glutaminase PdxT/SNO family. In terms of assembly, in the presence of PdxS, forms a dodecamer of heterodimers. Only shows activity in the heterodimer.

It catalyses the reaction aldehydo-D-ribose 5-phosphate + D-glyceraldehyde 3-phosphate + L-glutamine = pyridoxal 5'-phosphate + L-glutamate + phosphate + 3 H2O + H(+). The catalysed reaction is L-glutamine + H2O = L-glutamate + NH4(+). Its pathway is cofactor biosynthesis; pyridoxal 5'-phosphate biosynthesis. Its function is as follows. Catalyzes the hydrolysis of glutamine to glutamate and ammonia as part of the biosynthesis of pyridoxal 5'-phosphate. The resulting ammonia molecule is channeled to the active site of PdxS. This Cutibacterium acnes (strain DSM 16379 / KPA171202) (Propionibacterium acnes) protein is Pyridoxal 5'-phosphate synthase subunit PdxT.